The sequence spans 133 residues: UPF0102 protein Fnod_1509 (133 aa).

It belongs to the UPF0102 family.

This Fervidobacterium nodosum (strain ATCC 35602 / DSM 5306 / Rt17-B1) protein is UPF0102 protein Fnod_1509.